The sequence spans 624 residues: Chaperone protein HtpG (624 aa).

The tract at residues 1 to 336 (MKTQKKEVYN…SSDLPLNISR (336 aa)) is a; substrate-binding. The b stretch occupies residues 337–552 (EILQDNSITE…STEMTTQMAK (216 aa)). Residues 553 to 624 (LFSAAGQSVP…ISRMNKLLIK (72 aa)) are c.

It belongs to the heat shock protein 90 family. As to quaternary structure, homodimer.

Its subcellular location is the cytoplasm. In terms of biological role, molecular chaperone. Has ATPase activity. This Buchnera aphidicola subsp. Acyrthosiphon pisum (strain APS) (Acyrthosiphon pisum symbiotic bacterium) protein is Chaperone protein HtpG.